A 109-amino-acid polypeptide reads, in one-letter code: Large ribosomal subunit protein uL24 (109 aa).

The protein belongs to the universal ribosomal protein uL24 family. As to quaternary structure, part of the 50S ribosomal subunit.

Functionally, one of two assembly initiator proteins, it binds directly to the 5'-end of the 23S rRNA, where it nucleates assembly of the 50S subunit. Its function is as follows. One of the proteins that surrounds the polypeptide exit tunnel on the outside of the subunit. The polypeptide is Large ribosomal subunit protein uL24 (Rickettsia africae (strain ESF-5)).